Here is a 133-residue protein sequence, read N- to C-terminus: Large ribosomal subunit protein bL20 (133 aa).

It belongs to the bacterial ribosomal protein bL20 family.

Functionally, binds directly to 23S ribosomal RNA and is necessary for the in vitro assembly process of the 50S ribosomal subunit. It is not involved in the protein synthesizing functions of that subunit. This chain is Large ribosomal subunit protein bL20, found in Chelativorans sp. (strain BNC1).